Reading from the N-terminus, the 449-residue chain is Trigger factor (449 aa).

Residues 174 to 261 enclose the PPIase FKBP-type domain; it reads GDIAVVGFKG…LKDLKTRELP (88 aa). A disordered region spans residues 430–449; sequence ENSTVTEKAPDKDKPSVTDA. The segment covering 437-449 has biased composition (basic and acidic residues); the sequence is KAPDKDKPSVTDA.

Belongs to the FKBP-type PPIase family. Tig subfamily.

It localises to the cytoplasm. The enzyme catalyses [protein]-peptidylproline (omega=180) = [protein]-peptidylproline (omega=0). Functionally, involved in protein export. Acts as a chaperone by maintaining the newly synthesized protein in an open conformation. Functions as a peptidyl-prolyl cis-trans isomerase. This is Trigger factor from Synechococcus sp. (strain CC9311).